Here is a 412-residue protein sequence, read N- to C-terminus: Argininosuccinate synthase (412 aa).

Residues 11 to 19 and A37 contribute to the ATP site; that span reads AYSGGLDTS. Positions 88 and 93 each coordinate L-citrulline. ATP is bound at residue 116–124; sequence SHGATGKGN. Positions 120, 124, and 125 each coordinate L-aspartate. N124 is an L-citrulline binding site. L-citrulline-binding residues include R128, S181, S190, E271, and Y283.

Belongs to the argininosuccinate synthase family. Homotetramer.

The protein localises to the cytoplasm. It is found in the cytosol. It catalyses the reaction L-citrulline + L-aspartate + ATP = 2-(N(omega)-L-arginino)succinate + AMP + diphosphate + H(+). Its pathway is amino-acid biosynthesis; L-arginine biosynthesis; L-arginine from L-ornithine and carbamoyl phosphate: step 2/3. It participates in nitrogen metabolism; urea cycle; (N(omega)-L-arginino)succinate from L-aspartate and L-citrulline: step 1/1. One of the enzymes of the urea cycle, the metabolic pathway transforming neurotoxic amonia produced by protein catabolism into inocuous urea in the liver of ureotelic animals. Catalyzes the formation of arginosuccinate from aspartate, citrulline and ATP and together with ASL it is responsible for the biosynthesis of arginine in most body tissues. This is Argininosuccinate synthase from Xenopus tropicalis (Western clawed frog).